Consider the following 336-residue polypeptide: tRNA N6-adenosine threonylcarbamoyltransferase (336 aa).

2 residues coordinate Fe cation: His114 and His118. Substrate is bound by residues 136–140 (LVSGG), Asp169, Gly182, Asp186, and Asn275. Asp301 lines the Fe cation pocket.

It belongs to the KAE1 / TsaD family. The cofactor is Fe(2+).

The protein localises to the cytoplasm. The catalysed reaction is L-threonylcarbamoyladenylate + adenosine(37) in tRNA = N(6)-L-threonylcarbamoyladenosine(37) in tRNA + AMP + H(+). In terms of biological role, required for the formation of a threonylcarbamoyl group on adenosine at position 37 (t(6)A37) in tRNAs that read codons beginning with adenine. Is involved in the transfer of the threonylcarbamoyl moiety of threonylcarbamoyl-AMP (TC-AMP) to the N6 group of A37, together with TsaE and TsaB. TsaD likely plays a direct catalytic role in this reaction. This chain is tRNA N6-adenosine threonylcarbamoyltransferase, found in Streptococcus pneumoniae serotype 4 (strain ATCC BAA-334 / TIGR4).